Consider the following 236-residue polypeptide: Uridylate kinase (236 aa).

An ATP-binding site is contributed by 8-11; it reads KLSG. Glycine 51 lines the UMP pocket. ATP contacts are provided by glycine 52 and arginine 56. UMP-binding positions include aspartate 71 and 133-140; that span reads TGRPFFTT. 3 residues coordinate ATP: asparagine 161, phenylalanine 167, and aspartate 170.

This sequence belongs to the UMP kinase family. As to quaternary structure, homohexamer.

Its subcellular location is the cytoplasm. It carries out the reaction UMP + ATP = UDP + ADP. It participates in pyrimidine metabolism; CTP biosynthesis via de novo pathway; UDP from UMP (UMPK route): step 1/1. Inhibited by UTP. Catalyzes the reversible phosphorylation of UMP to UDP. The polypeptide is Uridylate kinase (Mesomycoplasma hyopneumoniae (strain 232) (Mycoplasma hyopneumoniae)).